Consider the following 225-residue polypeptide: Perlwapin-like protein (225 aa).

A signal peptide spans 1-19; the sequence is MNHLWLFIVTVSCIYLVYG. Disulfide bonds link cysteine 27–cysteine 57, cysteine 36–cysteine 61, cysteine 43–cysteine 56, and cysteine 49–cysteine 65. The 42-residue stretch at 27 to 68 folds into the WAP 1; atypical domain; the sequence is CKVKFMGTACPLGRLVCEEDGDCLGVNQVCCYDGCGTTCHNK. N-linked (GlcNAc...) asparagine glycosylation is present at asparagine 67. Residues 117 to 169 form the WAP 2 domain; it reads IIPSPELLCPVVTVRYAFCRFSTYTPCHTSNDCAVPGMKCCPDVCGKRCKFPI. Cystine bridges form between cysteine 125/cysteine 157, cysteine 135/cysteine 161, cysteine 143/cysteine 156, and cysteine 149/cysteine 165. Asparagine 170 carries an N-linked (GlcNAc...) asparagine glycan. Residues 176–225 are disordered; it reads QFQQTPLKPTVPLPQYQQTPLQPTVPSSQPPLQPTVPSPQSYNYKGACST. The span at 188–201 shows a compositional bias: low complexity; it reads LPQYQQTPLQPTVP. Residues 203–212 show a composition bias toward pro residues; it reads SQPPLQPTVP. The span at 213–225 shows a compositional bias: polar residues; the sequence is SPQSYNYKGACST.

As to expression, component of the acid-soluble organic matrix of calcified layers of the shell (at protein level).

It localises to the secreted. This Lottia gigantea (Giant owl limpet) protein is Perlwapin-like protein.